The following is a 175-amino-acid chain: Adenylyl-sulfate kinase (175 aa).

12 to 19 (GLSGAGKT) contributes to the ATP binding site. S86 acts as the Phosphoserine intermediate in catalysis.

This sequence belongs to the APS kinase family.

The catalysed reaction is adenosine 5'-phosphosulfate + ATP = 3'-phosphoadenylyl sulfate + ADP + H(+). It functions in the pathway sulfur metabolism; hydrogen sulfide biosynthesis; sulfite from sulfate: step 2/3. Catalyzes the synthesis of activated sulfate. This is Adenylyl-sulfate kinase from Synechococcus sp. (strain JA-2-3B'a(2-13)) (Cyanobacteria bacterium Yellowstone B-Prime).